The primary structure comprises 245 residues: Ribonuclease PH (245 aa).

Phosphate contacts are provided by residues R86 and G124–R126.

The protein belongs to the RNase PH family. As to quaternary structure, homohexameric ring arranged as a trimer of dimers.

The catalysed reaction is tRNA(n+1) + phosphate = tRNA(n) + a ribonucleoside 5'-diphosphate. Phosphorolytic 3'-5' exoribonuclease that plays an important role in tRNA 3'-end maturation. Removes nucleotide residues following the 3'-CCA terminus of tRNAs; can also add nucleotides to the ends of RNA molecules by using nucleoside diphosphates as substrates, but this may not be physiologically important. Probably plays a role in initiation of 16S rRNA degradation (leading to ribosome degradation) during starvation. The sequence is that of Ribonuclease PH from Bacillus anthracis (strain A0248).